Consider the following 200-residue polypeptide: AP-5 complex subunit sigma-1 (200 aa).

As to quaternary structure, probably part of the adaptor protein complex 5 (AP-5) a tetramer composed of AP5B1, AP5M1, AP5S1 and AP5Z1. Interacts with ZFYVE26 and SPG11.

It localises to the cytoplasm. It is found in the cytosol. Its subcellular location is the late endosome membrane. The protein localises to the lysosome membrane. In terms of biological role, as part of AP-5, a probable fifth adaptor protein complex it may be involved in endosomal transport. According to PubMed:20613862, it is required for efficient homologous recombination DNA double-strand break repair. This chain is AP-5 complex subunit sigma-1 (AP5S1), found in Homo sapiens (Human).